The following is a 147-amino-acid chain: Endoribonuclease YbeY (147 aa).

Positions 109, 113, and 119 each coordinate Zn(2+).

Belongs to the endoribonuclease YbeY family. Zn(2+) serves as cofactor.

The protein resides in the cytoplasm. Its function is as follows. Single strand-specific metallo-endoribonuclease involved in late-stage 70S ribosome quality control and in maturation of the 3' terminus of the 16S rRNA. This is Endoribonuclease YbeY from Magnetococcus marinus (strain ATCC BAA-1437 / JCM 17883 / MC-1).